The primary structure comprises 348 residues: Holliday junction branch migration complex subunit RuvB (348 aa).

The large ATPase domain (RuvB-L) stretch occupies residues 3–183 (DDGLVSAAAS…FGFTAHLDFY (181 aa)). ATP is bound by residues Leu22, Arg23, Gly64, Lys67, Thr68, Ser69, 130 to 132 (EDF), Arg173, Tyr183, and Arg220. Thr68 lines the Mg(2+) pocket. Positions 184 to 254 (DADELARVLT…IAQAALRIYD (71 aa)) are small ATPAse domain (RuvB-S). The head domain (RuvB-H) stretch occupies residues 257 to 348 (GLGLDRLDRA…TQVSLFTEGE (92 aa)). Residues Arg312 and Arg317 each coordinate DNA.

This sequence belongs to the RuvB family. In terms of assembly, homohexamer. Forms an RuvA(8)-RuvB(12)-Holliday junction (HJ) complex. HJ DNA is sandwiched between 2 RuvA tetramers; dsDNA enters through RuvA and exits via RuvB. An RuvB hexamer assembles on each DNA strand where it exits the tetramer. Each RuvB hexamer is contacted by two RuvA subunits (via domain III) on 2 adjacent RuvB subunits; this complex drives branch migration. In the full resolvosome a probable DNA-RuvA(4)-RuvB(12)-RuvC(2) complex forms which resolves the HJ.

It localises to the cytoplasm. It carries out the reaction ATP + H2O = ADP + phosphate + H(+). Functionally, the RuvA-RuvB-RuvC complex processes Holliday junction (HJ) DNA during genetic recombination and DNA repair, while the RuvA-RuvB complex plays an important role in the rescue of blocked DNA replication forks via replication fork reversal (RFR). RuvA specifically binds to HJ cruciform DNA, conferring on it an open structure. The RuvB hexamer acts as an ATP-dependent pump, pulling dsDNA into and through the RuvAB complex. RuvB forms 2 homohexamers on either side of HJ DNA bound by 1 or 2 RuvA tetramers; 4 subunits per hexamer contact DNA at a time. Coordinated motions by a converter formed by DNA-disengaged RuvB subunits stimulates ATP hydrolysis and nucleotide exchange. Immobilization of the converter enables RuvB to convert the ATP-contained energy into a lever motion, pulling 2 nucleotides of DNA out of the RuvA tetramer per ATP hydrolyzed, thus driving DNA branch migration. The RuvB motors rotate together with the DNA substrate, which together with the progressing nucleotide cycle form the mechanistic basis for DNA recombination by continuous HJ branch migration. Branch migration allows RuvC to scan DNA until it finds its consensus sequence, where it cleaves and resolves cruciform DNA. This Frankia casuarinae (strain DSM 45818 / CECT 9043 / HFP020203 / CcI3) protein is Holliday junction branch migration complex subunit RuvB.